Here is a 73-residue protein sequence, read N- to C-terminus: Large ribosomal subunit protein bL31 (73 aa).

This sequence belongs to the bacterial ribosomal protein bL31 family. Type A subfamily. As to quaternary structure, part of the 50S ribosomal subunit.

In terms of biological role, binds the 23S rRNA. This Agrobacterium fabrum (strain C58 / ATCC 33970) (Agrobacterium tumefaciens (strain C58)) protein is Large ribosomal subunit protein bL31.